The following is a 391-amino-acid chain: Formate-dependent phosphoribosylglycinamide formyltransferase (391 aa).

N(1)-(5-phospho-beta-D-ribosyl)glycinamide-binding positions include 18–19 (EL) and Glu-78. ATP-binding positions include Arg-110, Lys-151, 156–161 (SSGKGQ), 191–194 (EEFI), and Glu-199. Residues 115–305 (DLASKDLKIK…EFELHLRAFL (191 aa)) form the ATP-grasp domain. The Mg(2+) site is built by Glu-264 and Glu-276. N(1)-(5-phospho-beta-D-ribosyl)glycinamide contacts are provided by residues Asp-283, Lys-353, and 360-361 (RR).

It belongs to the PurK/PurT family. Homodimer.

It catalyses the reaction N(1)-(5-phospho-beta-D-ribosyl)glycinamide + formate + ATP = N(2)-formyl-N(1)-(5-phospho-beta-D-ribosyl)glycinamide + ADP + phosphate + H(+). It participates in purine metabolism; IMP biosynthesis via de novo pathway; N(2)-formyl-N(1)-(5-phospho-D-ribosyl)glycinamide from N(1)-(5-phospho-D-ribosyl)glycinamide (formate route): step 1/1. Involved in the de novo purine biosynthesis. Catalyzes the transfer of formate to 5-phospho-ribosyl-glycinamide (GAR), producing 5-phospho-ribosyl-N-formylglycinamide (FGAR). Formate is provided by PurU via hydrolysis of 10-formyl-tetrahydrofolate. The chain is Formate-dependent phosphoribosylglycinamide formyltransferase from Prochlorococcus marinus (strain MIT 9301).